A 123-amino-acid chain; its full sequence is Large ribosomal subunit protein uL24 (123 aa).

Positions 100–123 (RRPDGSTYKAERSVRISRKTGKEI) are disordered.

Belongs to the universal ribosomal protein uL24 family. Part of the 50S ribosomal subunit.

Its function is as follows. One of two assembly initiator proteins, it binds directly to the 5'-end of the 23S rRNA, where it nucleates assembly of the 50S subunit. One of the proteins that surrounds the polypeptide exit tunnel on the outside of the subunit. The polypeptide is Large ribosomal subunit protein uL24 (Nocardioides sp. (strain ATCC BAA-499 / JS614)).